Consider the following 283-residue polypeptide: Glutamate racemase (283 aa).

Residues Asp-28–Ser-29 and Tyr-60–Gly-61 each bind substrate. Cys-92 functions as the Proton donor/acceptor in the catalytic mechanism. Asn-93–Thr-94 lines the substrate pocket. Cys-204 acts as the Proton donor/acceptor in catalysis. Thr-205–His-206 contributes to the substrate binding site.

This sequence belongs to the aspartate/glutamate racemases family.

It catalyses the reaction L-glutamate = D-glutamate. Its pathway is cell wall biogenesis; peptidoglycan biosynthesis. Functionally, provides the (R)-glutamate required for cell wall biosynthesis. The chain is Glutamate racemase from Klebsiella pneumoniae (strain 342).